Consider the following 528-residue polypeptide: Zinc finger protein 16-like (528 aa).

The tract at residues 1-28 (MSRKRNHCYMETGASSESQGAFVDSAGP) is disordered. The stretch at 79–106 (IRVLKMELREKSDEIELLKAKLESAEKD) forms a coiled coil. Disordered regions lie at residues 159–202 (GAAE…TDAE) and 232–293 (FKGD…DRME). Residues 232 to 242 (FKGDSETKCED) show a composition bias toward basic and acidic residues. The segment covering 244 to 256 (PPMDEEDENEDSE) has biased composition (acidic residues). Composition is skewed to basic and acidic residues over residues 257-270 (EGRG…DHFP) and 278-293 (GEDR…DRME). The segment at 303–326 (FICPFCGTLCPDSSFLEEHIKLMH) adopts a C2H2-type 1 zinc-finger fold. Residues 333-345 (QSTSAGSSSQAEG) are compositionally biased toward low complexity. The tract at residues 333–359 (QSTSAGSSSQAEGDSGEAGPASRGARE) is disordered. 4 C2H2-type zinc fingers span residues 366 to 388 (YECG…QRIH), 394 to 416 (FVCP…RLSH), 423 to 445 (FPCP…QRVH), and 451 to 473 (YACP…MRIH). The segment at 479-501 (YTCYQCGRSFRHLGTYKSHRCMP) adopts a C2H2-type 6; degenerate zinc-finger fold. The interval 502–528 (ATQMPSEHSPPWAQEDKVQTGRLQGYV) is disordered.

The protein belongs to the krueppel C2H2-type zinc-finger protein family.

Its subcellular location is the nucleus. Its function is as follows. Probable transcription factor. Important for development and migration of oligodendrocyte precursor cells, and normal myelination of axons in the central nervous system (CNS). Functions autonomously in oligodendrocytes to promote CNS myelination. Seems to act in parallel with notch3 during oligodendrocyte development. This chain is Zinc finger protein 16-like, found in Danio rerio (Zebrafish).